The chain runs to 654 residues: NADPH-dependent diflavin oxidoreductase 1 (654 aa).

The segment covering 1 to 10 (MSGSQSSGSP) has biased composition (low complexity). Positions 1 to 22 (MSGSQSSGSPGSPGPPGPPGRS) are disordered. Residues 23–167 (ALVVYGSETG…TFIPWLAGFR (145 aa)) enclose the Flavodoxin-like domain. FMN contacts are provided by residues 29–34 (SETGNA), 76–79 (STTG), and 114–123 (LGDSSYPKFN). Residues 235 to 485 (HDSLTATLVQ…QLQRGGLNSS (251 aa)) enclose the FAD-binding FR-type domain. FAD is bound by residues Arg389, 419–422 (RQFS), and 458–461 (GVCT). Residues Thr500, 568-569 (SR), and 574-578 (KVYVQ) contribute to the NADP(+) site. Residue Trp654 coordinates FAD.

Belongs to the NADPH-dependent diflavin oxidoreductase NDOR1 family. It in the N-terminal section; belongs to the flavodoxin family. This sequence in the C-terminal section; belongs to the flavoprotein pyridine nucleotide cytochrome reductase family. Interacts with dre2; as part of the cytosolic iron-sulfur (Fe-S) protein assembly (CIA) machinery. It depends on FAD as a cofactor. Requires FMN as cofactor.

It localises to the cytoplasm. It is found in the mitochondrion. The enzyme catalyses 2 oxidized [2Fe-2S]-[protein] + NADPH = 2 reduced [2Fe-2S]-[protein] + NADP(+) + H(+). In terms of biological role, NADPH-dependent reductase which is a central component of the cytosolic iron-sulfur (Fe-S) protein assembly (CIA) machinery. Transfers electrons from NADPH via its FAD and FMN prosthetic groups to the [2Fe-2S] cluster of dre2, another key component of the CIA machinery. In turn, this reduced cluster provides electrons for assembly of cytosolic iron-sulfur cluster proteins. Positively controls H(2)O(2)-induced cell death. This is NADPH-dependent diflavin oxidoreductase 1 from Emericella nidulans (strain FGSC A4 / ATCC 38163 / CBS 112.46 / NRRL 194 / M139) (Aspergillus nidulans).